We begin with the raw amino-acid sequence, 183 residues long: MATKIRLQRNGRKSYAFYSIVIADVRAPRDGKFTEKIGTYNPNTNPATVDLNFERALHWVMCGAQPTDTVRNILSKEGVYMKKHLLGGVAKGAFTEAEAEAKFEAWKNNKQSGLATLKAKLDEAKKAEAKARLEAEKKVNEEIAKKVAEKKAAEAAAKAEAEAANAPAEEAPAAEATEAPAEA.

A compositionally biased stretch (basic and acidic residues) spans 149–161; sequence EKKAAEAAAKAEA. Residues 149 to 183 are disordered; the sequence is EKKAAEAAAKAEAEAANAPAEEAPAAEATEAPAEA. Residues 162-183 show a composition bias toward low complexity; sequence EAANAPAEEAPAAEATEAPAEA.

This sequence belongs to the bacterial ribosomal protein bS16 family.

The polypeptide is Small ribosomal subunit protein bS16 (Phocaeicola vulgatus (strain ATCC 8482 / DSM 1447 / JCM 5826 / CCUG 4940 / NBRC 14291 / NCTC 11154) (Bacteroides vulgatus)).